Consider the following 82-residue polypeptide: Large ribosomal subunit protein bL31 (82 aa).

Belongs to the bacterial ribosomal protein bL31 family. Type A subfamily. Part of the 50S ribosomal subunit.

Binds the 23S rRNA. The polypeptide is Large ribosomal subunit protein bL31 (Rippkaea orientalis (strain PCC 8801 / RF-1) (Cyanothece sp. (strain PCC 8801))).